Reading from the N-terminus, the 355-residue chain is dTDP-glucose 4,6-dehydratase (355 aa).

Residues 12 to 13, 33 to 36, 59 to 60, 81 to 85, and threonine 100 contribute to the NAD(+) site; these read FI, DKLT, DI, and LAAES. A substrate-binding site is contributed by serine 85. Threonine 134 lines the substrate pocket. Aspartate 135 acts as the Proton donor in catalysis. Active-site proton acceptor residues include glutamate 136 and tyrosine 160. 160–164 contributes to the NAD(+) binding site; it reads YSASK. Asparagine 189 contributes to the substrate binding site. Residue asparagine 190 participates in NAD(+) binding. Substrate-binding positions include 199 to 200, 215 to 217, arginine 224, asparagine 259, and 293 to 297; these read KL, PVY, and DRPGH.

It belongs to the NAD(P)-dependent epimerase/dehydratase family. dTDP-glucose dehydratase subfamily. In terms of assembly, homodimer. The cofactor is NAD(+).

The catalysed reaction is dTDP-alpha-D-glucose = dTDP-4-dehydro-6-deoxy-alpha-D-glucose + H2O. The protein operates within carbohydrate biosynthesis; dTDP-L-rhamnose biosynthesis. It functions in the pathway bacterial outer membrane biogenesis; LPS O-antigen biosynthesis. Functionally, catalyzes the dehydration of dTDP-D-glucose to form dTDP-6-deoxy-D-xylo-4-hexulose via a three-step process involving oxidation, dehydration and reduction. This is dTDP-glucose 4,6-dehydratase (rfbB1) from Neisseria meningitidis serogroup B (strain ATCC BAA-335 / MC58).